The following is a 477-amino-acid chain: Phosphomethylpyrimidine synthase (477 aa).

Substrate contacts are provided by residues Asn-67, Met-96, Tyr-125, His-160, 180 to 182 (SRG), 221 to 224 (DGLR), and Glu-260. His-264 contributes to the Zn(2+) binding site. A substrate-binding site is contributed by Tyr-287. His-328 lines the Zn(2+) pocket. Residues Cys-408, Cys-411, and Cys-416 each coordinate [4Fe-4S] cluster. Basic and acidic residues predominate over residues 427–440 (AGDGMDGLESRTDL). Residues 427-477 (AGDGMDGLESRTDLDSSAAAAVNRPPTGVHRAEKLDDIPCPVAEDDVAADD) form a disordered region.

It belongs to the ThiC family. It depends on [4Fe-4S] cluster as a cofactor.

It catalyses the reaction 5-amino-1-(5-phospho-beta-D-ribosyl)imidazole + S-adenosyl-L-methionine = 4-amino-2-methyl-5-(phosphooxymethyl)pyrimidine + CO + 5'-deoxyadenosine + formate + L-methionine + 3 H(+). Its pathway is cofactor biosynthesis; thiamine diphosphate biosynthesis. Its function is as follows. Catalyzes the synthesis of the hydroxymethylpyrimidine phosphate (HMP-P) moiety of thiamine from aminoimidazole ribotide (AIR) in a radical S-adenosyl-L-methionine (SAM)-dependent reaction. This is Phosphomethylpyrimidine synthase from Natronomonas pharaonis (strain ATCC 35678 / DSM 2160 / CIP 103997 / JCM 8858 / NBRC 14720 / NCIMB 2260 / Gabara) (Halobacterium pharaonis).